A 282-amino-acid chain; its full sequence is Pantothenate synthetase (282 aa).

30 to 37 lines the ATP pocket; it reads MGALHQGH. Residue histidine 37 is the Proton donor of the active site. Glutamine 61 is a binding site for (R)-pantoate. A beta-alanine-binding site is contributed by glutamine 61. 149 to 152 lines the ATP pocket; the sequence is GEKD. Residue glutamine 155 coordinates (R)-pantoate. Residues leucine 178 and 186–189 contribute to the ATP site; that span reads MSSR.

The protein belongs to the pantothenate synthetase family. In terms of assembly, homodimer.

The protein localises to the cytoplasm. The enzyme catalyses (R)-pantoate + beta-alanine + ATP = (R)-pantothenate + AMP + diphosphate + H(+). Its pathway is cofactor biosynthesis; (R)-pantothenate biosynthesis; (R)-pantothenate from (R)-pantoate and beta-alanine: step 1/1. In terms of biological role, catalyzes the condensation of pantoate with beta-alanine in an ATP-dependent reaction via a pantoyl-adenylate intermediate. The chain is Pantothenate synthetase from Flavobacterium psychrophilum (strain ATCC 49511 / DSM 21280 / CIP 103535 / JIP02/86).